The primary structure comprises 204 residues: Ribonuclease HII (204 aa).

Residues 1-197 (MILGIDEAGR…KNRILNPKLL (197 aa)) form the RNase H type-2 domain. Positions 6, 7, and 103 each coordinate a divalent metal cation.

This sequence belongs to the RNase HII family. The cofactor is Mn(2+). Mg(2+) serves as cofactor.

It is found in the cytoplasm. The catalysed reaction is Endonucleolytic cleavage to 5'-phosphomonoester.. Endonuclease that specifically degrades the RNA of RNA-DNA hybrids. The polypeptide is Ribonuclease HII (Helicobacter pylori (strain G27)).